The primary structure comprises 193 residues: Holliday junction branch migration complex subunit RuvA (193 aa).

Residues 1–64 (MIGRIAGVLL…EDAHLLYGFL (64 aa)) form a domain I region. The tract at residues 65 to 139 (TPQERSTFRE…GKLGADLGAM (75 aa)) is domain II. The interval 139 to 143 (MAGAA) is flexible linker. Positions 144 to 193 (SQSDHASDILNALLALGYSEKEGLAAIKNVPAGTGVSEGIKLALKALSKA) are domain III.

This sequence belongs to the RuvA family. As to quaternary structure, homotetramer. Forms an RuvA(8)-RuvB(12)-Holliday junction (HJ) complex. HJ DNA is sandwiched between 2 RuvA tetramers; dsDNA enters through RuvA and exits via RuvB. An RuvB hexamer assembles on each DNA strand where it exits the tetramer. Each RuvB hexamer is contacted by two RuvA subunits (via domain III) on 2 adjacent RuvB subunits; this complex drives branch migration. In the full resolvosome a probable DNA-RuvA(4)-RuvB(12)-RuvC(2) complex forms which resolves the HJ.

It is found in the cytoplasm. The RuvA-RuvB-RuvC complex processes Holliday junction (HJ) DNA during genetic recombination and DNA repair, while the RuvA-RuvB complex plays an important role in the rescue of blocked DNA replication forks via replication fork reversal (RFR). RuvA specifically binds to HJ cruciform DNA, conferring on it an open structure. The RuvB hexamer acts as an ATP-dependent pump, pulling dsDNA into and through the RuvAB complex. HJ branch migration allows RuvC to scan DNA until it finds its consensus sequence, where it cleaves and resolves the cruciform DNA. In Paraburkholderia phymatum (strain DSM 17167 / CIP 108236 / LMG 21445 / STM815) (Burkholderia phymatum), this protein is Holliday junction branch migration complex subunit RuvA.